Reading from the N-terminus, the 373-residue chain is Chloroperoxidase (373 aa).

An N-terminal signal peptide occupies residues 1–20 (MFSKVLPFVGAVAALPHSVR). At Q21 the chain carries Pyrrolidone carboxylic acid. N-linked (GlcNAc...) asparagine glycosylation occurs at N33. Residue C50 coordinates heme. Residues C100 and C108 are joined by a disulfide bond. N114 is a glycosylation site (N-linked (GlcNAc...) asparagine). Mn(2+)-binding residues include E125, H126, and S129. The active site involves E204. N237 carries an N-linked (GlcNAc...) asparagine glycan. T259 is a glycosylation site (O-linked (Man) threonine). 4 O-linked (Man) serine glycosylation sites follow: S260, S262, S263, and S269. T271 carries O-linked (Man) threonine glycosylation. S272 is a glycosylation site (O-linked (Man) serine). The O-linked (Man) threonine glycan is linked to T273. Residues T296, T304, and T314 are each glycosylated (O-linked (Man...) threonine). The propeptide occupies 322–373 (EAAPAATTSMAVFKNPYLEAIGTQDIKNQQAYVSSKAAAMASAMAANKARNL).

This sequence belongs to the chloroperoxidase family. The cofactor is heme b. Requires Mn(2+) as cofactor. Post-translationally, N- and O-glycosylated.

The catalysed reaction is RH + Cl(-) + H2O2 = RCl + 2 H2O.. Functionally, catalyzes peroxidative halogenations involved in the biosynthesis of clardariomycin (2,2-dichloro-1,3-cyclo-pentenedione). The enzyme also has potent catalase activity and in the absence of halide ion, acts as a peroxidase similar to plant peroxidases. In Leptoxyphium fumago (Caldariomyces fumago), this protein is Chloroperoxidase (CPO).